Here is a 302-residue protein sequence, read N- to C-terminus: Acetylglutamate kinase (302 aa).

Residues 73–74 (GG), arginine 95, and asparagine 200 contribute to the substrate site.

The protein belongs to the acetylglutamate kinase family. ArgB subfamily.

It localises to the cytoplasm. It carries out the reaction N-acetyl-L-glutamate + ATP = N-acetyl-L-glutamyl 5-phosphate + ADP. The protein operates within amino-acid biosynthesis; L-arginine biosynthesis; N(2)-acetyl-L-ornithine from L-glutamate: step 2/4. Catalyzes the ATP-dependent phosphorylation of N-acetyl-L-glutamate. The protein is Acetylglutamate kinase of Sphingopyxis alaskensis (strain DSM 13593 / LMG 18877 / RB2256) (Sphingomonas alaskensis).